A 632-amino-acid polypeptide reads, in one-letter code: DNA mismatch repair protein MutL (632 aa).

Residues 376–397 (EQPQAEPRQSFTPGSGAGSGYQ) form a disordered region.

It belongs to the DNA mismatch repair MutL/HexB family.

Its function is as follows. This protein is involved in the repair of mismatches in DNA. It is required for dam-dependent methyl-directed DNA mismatch repair. May act as a 'molecular matchmaker', a protein that promotes the formation of a stable complex between two or more DNA-binding proteins in an ATP-dependent manner without itself being part of a final effector complex. The polypeptide is DNA mismatch repair protein MutL (Pseudomonas entomophila (strain L48)).